The chain runs to 67 residues: MKIQLFFFILLFWVTILPAKMKYPEYGSLDLRRECRMGNGRCKNQCHENEIRIAYCIRPGTHCCLQQ.

The N-terminal stretch at 1–19 (MKIQLFFFILLFWVTILPA) is a signal peptide. 3 disulfide bridges follow: cysteine 35–cysteine 63, cysteine 42–cysteine 56, and cysteine 46–cysteine 64.

It belongs to the beta-defensin family.

Its subcellular location is the secreted. In terms of biological role, has antibacterial activity. This chain is Beta-defensin 110 (DEFB110), found in Pan troglodytes (Chimpanzee).